The chain runs to 101 residues: NADH-quinone oxidoreductase subunit K (101 aa).

A run of 3 helical transmembrane segments spans residues 4–24, 29–49, and 65–85; these read VGHYLAVSAVLFTLGVLGIFI, IIVILMAIELILLAVNINLVA, and FVLTVAAGEAAIGLAILVIYF.

It belongs to the complex I subunit 4L family. In terms of assembly, NDH-1 is composed of 14 different subunits. Subunits NuoA, H, J, K, L, M, N constitute the membrane sector of the complex.

It is found in the cell inner membrane. It catalyses the reaction a quinone + NADH + 5 H(+)(in) = a quinol + NAD(+) + 4 H(+)(out). Its function is as follows. NDH-1 shuttles electrons from NADH, via FMN and iron-sulfur (Fe-S) centers, to quinones in the respiratory chain. The immediate electron acceptor for the enzyme in this species is believed to be ubiquinone. Couples the redox reaction to proton translocation (for every two electrons transferred, four hydrogen ions are translocated across the cytoplasmic membrane), and thus conserves the redox energy in a proton gradient. This chain is NADH-quinone oxidoreductase subunit K, found in Sphingopyxis alaskensis (strain DSM 13593 / LMG 18877 / RB2256) (Sphingomonas alaskensis).